We begin with the raw amino-acid sequence, 622 residues long: MGPILERISLPEDIKKLKPSELMALAQELREYIITVASQNGGHLAPSLGVVELTIALHFVFEAPKDKIIWDVGHQAYAHKILTGRKKQFKTLRTFGGLSGFPKRDESPYDAFGVGHSSTSISAALGMALARDLKGEQYEVVAVIGDGALTGGMAFEALNHAGHLQKKLIVVVNDNEMSIAQNVGALSAYLSRIRTDPKYSRGKDELEALIKKIPHIGPTMVKIGERLKDSFKYLLVPGMLFEELGFTYLGPIDGHNIKEMIEVFSRAKTFAGPVVVHVITKKGKGYHWAEENPDGFHGVGKFYISTGEPVEAPRVSFTEVFGKALVELAQDRPEVVAITAAMPTGTGLNYFAQNYPERFYDVGIAEQHAVTMAAGMACEGLKPVVAIYSTFLQRSFDQIIHDVCLQNLPVVFAVDRAGIVGEDGPTHHGIFDLSYLRMIPNLTIMVPRNEDMLRKMLFTALNHSGPVALRYPRGAAVGVELTPYEQLPIGTAEILKEGSDGVVIGVGRPLNYALKAAQKLENEGISLTVIDARFVKPLDYKLLEEVGSLHKPVITVEENVVAGGFGSAVNEYFSFRGIGTKVVNLGIADEFPPHGKVEEILNLYGLTEEKLYLKFREILSKL.

Residues His74 and 115 to 117 (GHS) contribute to the thiamine diphosphate site. Asp146 contributes to the Mg(2+) binding site. Residues 147 to 148 (GA), Asn175, Tyr286, and Glu366 contribute to the thiamine diphosphate site. Asn175 contacts Mg(2+).

Belongs to the transketolase family. DXPS subfamily. As to quaternary structure, homodimer. Mg(2+) serves as cofactor. The cofactor is thiamine diphosphate.

The catalysed reaction is D-glyceraldehyde 3-phosphate + pyruvate + H(+) = 1-deoxy-D-xylulose 5-phosphate + CO2. Its pathway is metabolic intermediate biosynthesis; 1-deoxy-D-xylulose 5-phosphate biosynthesis; 1-deoxy-D-xylulose 5-phosphate from D-glyceraldehyde 3-phosphate and pyruvate: step 1/1. Catalyzes the acyloin condensation reaction between C atoms 2 and 3 of pyruvate and glyceraldehyde 3-phosphate to yield 1-deoxy-D-xylulose-5-phosphate (DXP). In Carboxydothermus hydrogenoformans (strain ATCC BAA-161 / DSM 6008 / Z-2901), this protein is 1-deoxy-D-xylulose-5-phosphate synthase.